The primary structure comprises 284 residues: MKLDGYTRLAAVVANPIKHSISPFIHNRAFEATATNGAYVAWEIEASDLAETVANIRRYQMFGINLSMPYKEQVIPYLDKLSDEARLIGAVNTVVNENGNLIGYNTDGKGFFKCLPSFTISGKKMTLLGAGGAAKSILAQAILDGVSQISVFVRSVSMEKTRPYLDKLQEQTGFKVDLYALENVSELQARIVESDLLVNATSVGMDGQSSPVPESINLPETILVADIIYQPFETPFLKWARSQGKPAVNGLGMLLYQAAEAFQLWTGKEMPTEEIWQSLTEKYQ.

Shikimate is bound by residues 20–22 and S67; that span reads SIS. The active-site Proton acceptor is the K71. D83 is an NADP(+) binding site. Residues N92 and D107 each coordinate shikimate. NADP(+)-binding positions include 129 to 133 and I227; that span reads GAGGA. Y229 provides a ligand contact to shikimate. Position 250 (G250) interacts with NADP(+).

It belongs to the shikimate dehydrogenase family. Homodimer.

It catalyses the reaction shikimate + NADP(+) = 3-dehydroshikimate + NADPH + H(+). The protein operates within metabolic intermediate biosynthesis; chorismate biosynthesis; chorismate from D-erythrose 4-phosphate and phosphoenolpyruvate: step 4/7. Functionally, involved in the biosynthesis of the chorismate, which leads to the biosynthesis of aromatic amino acids. Catalyzes the reversible NADPH linked reduction of 3-dehydroshikimate (DHSA) to yield shikimate (SA). In Streptococcus pneumoniae (strain ATCC 700669 / Spain 23F-1), this protein is Shikimate dehydrogenase (NADP(+)).